A 205-amino-acid polypeptide reads, in one-letter code: Glycerol-3-phosphate acyltransferase (205 aa).

5 consecutive transmembrane segments (helical) span residues 4 to 24 (IAPG…AILV), 56 to 76 (VAVL…AYAL), 81 to 101 (FWLG…VFFG), 112 to 132 (FGAI…TWLL), and 138 to 158 (GYSS…VWWF).

It belongs to the PlsY family. As to quaternary structure, probably interacts with PlsX.

It is found in the cell inner membrane. It carries out the reaction an acyl phosphate + sn-glycerol 3-phosphate = a 1-acyl-sn-glycero-3-phosphate + phosphate. It participates in lipid metabolism; phospholipid metabolism. Its function is as follows. Catalyzes the transfer of an acyl group from acyl-phosphate (acyl-PO(4)) to glycerol-3-phosphate (G3P) to form lysophosphatidic acid (LPA). This enzyme utilizes acyl-phosphate as fatty acyl donor, but not acyl-CoA or acyl-ACP. The protein is Glycerol-3-phosphate acyltransferase of Citrobacter koseri (strain ATCC BAA-895 / CDC 4225-83 / SGSC4696).